The primary structure comprises 1213 residues: Hybrid signal transduction histidine kinase K (1213 aa).

4 disordered regions span residues 1–37 (MIELNNHSKINKNENNTNTRNNSSNNNNNNNNINKTN), 98–189 (NNNY…SSSS), 279–392 (NKNV…IPFR), and 495–565 (TTEQ…NYNN). Composition is skewed to low complexity over residues 98–162 (NNNY…QKDQ), 171–189 (SLSSSSSSSSLSSSSSSSS), 279–331 (NKNV…NSGA), 339–371 (NNNNNNNNNNNNNNNNNNNSNSNSNNNSKSNNN), 498–511 (QQQQLQQQQQQQQQ), and 522–565 (QRQQ…NYNN). 6 consecutive transmembrane segments (helical) span residues 600–618 (IIFNSFNFICSIVLDGSNI), 628–648 (LIIGFCFTILSFIPSWIIFFW), 652–672 (INKPAVMAIIAMPMSISSLVI), 676–696 (TGSIHYPCHILCFTLCFALTI), 729–749 (IQWSLMVLSIYLLFFVANLYG), and 768–788 (IIDVTIIIMTLIFTLCYQYFI). Residues 822 to 1052 (TMSHEIRTPL…TFWFILPLEE (231 aa)) form the Histidine kinase domain. Phosphohistidine; by autocatalysis is present on His-825. A Response regulatory domain is found at 1076–1199 (KVLIAEDNII…QLRSAIEMAI (124 aa)). Asp-1125 is modified (4-aspartylphosphate).

Activation probably requires transfer of a phosphate group between a histidine in the kinase core (transmitter) domain and an aspartate of the receiver domain.

It localises to the nucleus membrane. It catalyses the reaction ATP + protein L-histidine = ADP + protein N-phospho-L-histidine.. Involved in a signal transduction pathway that regulates morphogenesis and controls entry into the culmination stage. May act via the regA pathway, being activated by a morphogenesis-stimulated ligand, reducing phosphodiesterase regA levels and allowing cAMP level to rise to promote the culmination stage. This protein probably undergoes an ATP-dependent autophosphorylation at a conserved histidine residue in the kinase core, and a phosphoryl group is then transferred to a conserved aspartate residue in the receiver domain. This chain is Hybrid signal transduction histidine kinase K (dhkK), found in Dictyostelium discoideum (Social amoeba).